The following is a 339-amino-acid chain: Olfactory receptor 7E24 (339 aa).

Topologically, residues methionine 1 to proline 43 are extracellular. Asparagine 23 carries an N-linked (GlcNAc...) asparagine glycan. The chain crosses the membrane as a helical span at residues valine 44 to isoleucine 64. Residues leucine 65 to histidine 72 lie on the Cytoplasmic side of the membrane. A helical membrane pass occupies residues leucine 73–serine 93. Residues threonine 94 to threonine 117 are Extracellular-facing. Cysteine 115 and cysteine 207 are joined by a disulfide. Residues glutamine 118–tyrosine 138 form a helical membrane-spanning segment. Over aspartate 139–arginine 157 the chain is Cytoplasmic. A helical transmembrane segment spans residues leucine 158–asparagine 178. Residues leucine 179–methionine 215 lie on the Extracellular side of the membrane. A helical membrane pass occupies residues valine 216–serine 235. Residues tyrosine 236 to alanine 255 are Cytoplasmic-facing. A helical membrane pass occupies residues phenylalanine 256 to glycine 276. The Extracellular segment spans residues tyrosine 277–serine 289. A helical transmembrane segment spans residues methionine 290–leucine 310. Over arginine 311–glycine 339 the chain is Cytoplasmic.

Belongs to the G-protein coupled receptor 1 family.

The protein localises to the cell membrane. In terms of biological role, odorant receptor. In Homo sapiens (Human), this protein is Olfactory receptor 7E24 (OR7E24).